Reading from the N-terminus, the 937-residue chain is MLKLLLGDPNARKLKRYSPIVSDINLLEEDISPLSDDELRSRTSDLRQRLFNAGDLHNQIPILDELLPEAFSIVREASKRVLGMRHFDVQLIGGMVLHEGQIAEMKTGEGKTLVATLPSYLNALTGRGVHVVTVNDYLARRDAEWMGQVHRFLGLSVGLIQQDMRPEERRRNYACDITYATNSELGFDYLRDNMAADISEVVQREFQFCVIDEVDSILIDEARTPLIISGQVEREQEKYQQAAQLAASLERSAEMGKDGIDPEGDYEVDEKQRSCTLTDEGFAKAEQTLGVQDLFDPQDPWAHYITNALKAKELFVKDVNYIVRDDEAVIVDEFTGRVMPGRRWSDGQHQAIEAKESLQIQPETQTLASITYQNFFLLYPRLAGMTGTAKTEEVEFEKTYKLQTTIVPTNRIRARQDWADQVYKTEVAKWRAVANETADIHKKARPVLVGTTSVEKSELLSSLLTEQDIPHNLLNAKPENVERESEIVAQAGRAGAVTIATNMAGRGTDIILGGNSDYMARLKLREVLLSRLVKPEDGPLPSLPVQDSATASGFSEASATVAPRVSASLYPCELSGPTDQLLAQLARDLVKAWGDRALSVLDLEERIATAAEKAPTDDAQIQSLREAIAFVRGEYDAVVKEEEARVRDAGGLHVIGTERHESRRVDNQLRGRAGRQGDPGSTRFFLSLGDNLLRIFGGERVAGLMNAFRVEEDMPIESGMLTRSLEGAQKKVETYYYDIRKQVFEYDEVMNNQRRAVYSERRRVLDGRALKKQVIGYGERTMNEIVEAYVNPDLPPEEWDLDQLVGKVKEFIYLLEDLTPAQVNGLGMDELKAFLQEQLRNAYDLKEGQIDQQRPGLMREAERFFILQQIDTLWREHLQAMDALRESVGLRGYGQKDPLIEYKNEGYDMFLEMMTNMRRNVIYSMFMFQPAAPQNQN.

ATP-binding positions include Gln90, 108-112, and Asp509; that span reads GEGKT.

This sequence belongs to the SecA family. As to quaternary structure, monomer and homodimer. Part of the essential Sec protein translocation apparatus which comprises SecA, SecYEG and auxiliary proteins SecDF. Other proteins may also be involved.

It localises to the cell inner membrane. The protein localises to the cellular thylakoid membrane. The protein resides in the cytoplasm. It carries out the reaction ATP + H2O + cellular proteinSide 1 = ADP + phosphate + cellular proteinSide 2.. Its function is as follows. Part of the Sec protein translocase complex. Interacts with the SecYEG preprotein conducting channel. Has a central role in coupling the hydrolysis of ATP to the transfer of proteins into and across the cell membrane, serving as an ATP-driven molecular motor driving the stepwise translocation of polypeptide chains across the membrane. Probably participates in protein translocation into and across both the cytoplasmic and thylakoid membranes in cyanobacterial cells. The chain is Protein translocase subunit SecA from Synechococcus sp. (strain CC9902).